Consider the following 145-residue polypeptide: MSQKAIKGYINLIIPAGGATPAPPIGPALGQRKVNIKTFCDEFNNSTKDTEKGVPLPTLITVYEDSSFSFKIKTPPASYFLKKYARITKGSSATKKEAVVGKVTMDDCREIAKLKMPDLNTKDIEAATKIICGSAASIGLEVVGN.

The protein belongs to the universal ribosomal protein uL11 family. As to quaternary structure, part of the ribosomal stalk of the 50S ribosomal subunit. Interacts with L10 and the large rRNA to form the base of the stalk. L10 forms an elongated spine to which L12 dimers bind in a sequential fashion forming a multimeric L10(L12)X complex. Post-translationally, one or more lysine residues are methylated.

Its function is as follows. Forms part of the ribosomal stalk which helps the ribosome interact with GTP-bound translation factors. The chain is Large ribosomal subunit protein uL11 from Rickettsia felis (strain ATCC VR-1525 / URRWXCal2) (Rickettsia azadi).